The following is a 407-amino-acid chain: Protein arginine N-methyltransferase 2 (407 aa).

Residues 186-407 enclose the RMT2 domain; sequence TAADQATYLK…YYYHPEIRFA (222 aa). S-adenosyl-L-methionine-binding positions include Tyr-193, Met-223, 246–251, 267–269, 294–295, and Asp-315; these read FGMGII, EAH, and WQ.

Belongs to the class I-like SAM-binding methyltransferase superfamily. RMT2 methyltransferase family. As to quaternary structure, monomer.

Its subcellular location is the cytoplasm. It is found in the nucleus. S-adenosyl-L-methionine-dependent protein-arginine N-methyltransferase that methylates the delta-nitrogen atom of arginine residues to form N5-methylarginine (type IV) in target proteins. Monomethylates ribosomal protein L12. The polypeptide is Protein arginine N-methyltransferase 2 (Kluyveromyces lactis (strain ATCC 8585 / CBS 2359 / DSM 70799 / NBRC 1267 / NRRL Y-1140 / WM37) (Yeast)).